We begin with the raw amino-acid sequence, 444 residues long: Orexin receptor type 2 (444 aa).

Residues 1 to 10 (MSGTKLEDSP) are compositionally biased toward basic and acidic residues. The interval 1–30 (MSGTKLEDSPPCRNWSSAPELNETQEPFLN) is disordered. At 1 to 54 (MSGTKLEDSPPCRNWSSAPELNETQEPFLNPTDYDDEEFLRYLWREYLHPKEYE) the chain is on the extracellular side. N-linked (GlcNAc...) asparagine glycosylation is found at N14 and N22. Residues 14–27 (NWSSAPELNETQEP) are compositionally biased toward polar residues. Positions 33–49 (DYDDEEFLRYLWREYLH) are required for response to orexin-A. The chain crosses the membrane as a helical span at residues 55–75 (WVLIAGYIIVFVVALVGNVLV). At 76–88 (CVAVWKNHHMRTV) the chain is on the cytoplasmic side. A helical transmembrane segment spans residues 89-110 (TNYFIVNLSLADVLVTITCLPA). Over 111–127 (TLVVDITETWFFGQSLC) the chain is Extracellular. A disulfide bridge links C127 with C210. Residues 128–150 (KVIPYLQTVSVSVSVLTLSCIAL) traverse the membrane as a helical segment. At 151–170 (DRWYAICHPLMFKSTAKRAR) the chain is on the cytoplasmic side. A helical membrane pass occupies residues 171 to 191 (NSIVIIWIVSCIIMIPQAIVM). Topologically, residues 192–222 (ECSTMLPGLANKTTLFTVCDERWGGEIYPKM) are extracellular. N202 is a glycosylation site (N-linked (GlcNAc...) asparagine). Residues 223–243 (YHICFFLVTYMAPLCLMVLAY) traverse the membrane as a helical segment. The Cytoplasmic segment spans residues 244–304 (LQIFRKLWCR…QIRARRKTAR (61 aa)). A helical transmembrane segment spans residues 305–326 (MLMVVLLVFAICYLPISILNVL). Topologically, residues 327–342 (KRVFGMFTHTEDRETV) are extracellular. Residues 343–366 (YAWFTFSHWLVYANSAANPIIYNF) form a helical membrane-spanning segment. The Cytoplasmic segment spans residues 367–444 (LSGKFREEFK…ANGAGPLQNW (78 aa)).

The protein belongs to the G-protein coupled receptor 1 family.

It localises to the cell membrane. Nonselective, high-affinity receptor for both orexin-A and orexin-B neuropeptides. Triggers an increase in cytoplasmic Ca(2+) levels in response to orexin-A binding. The polypeptide is Orexin receptor type 2 (HCRTR2) (Canis lupus familiaris (Dog)).